Reading from the N-terminus, the 638-residue chain is 1-deoxy-D-xylulose-5-phosphate synthase (638 aa).

Thiamine diphosphate-binding positions include H75 and 116–118 (AHS). A Mg(2+)-binding site is contributed by D147. Thiamine diphosphate is bound by residues 148–149 (GA), N177, Y288, and E370. Mg(2+) is bound at residue N177.

It belongs to the transketolase family. DXPS subfamily. Homodimer. Requires Mg(2+) as cofactor. Thiamine diphosphate is required as a cofactor.

It catalyses the reaction D-glyceraldehyde 3-phosphate + pyruvate + H(+) = 1-deoxy-D-xylulose 5-phosphate + CO2. It participates in metabolic intermediate biosynthesis; 1-deoxy-D-xylulose 5-phosphate biosynthesis; 1-deoxy-D-xylulose 5-phosphate from D-glyceraldehyde 3-phosphate and pyruvate: step 1/1. In terms of biological role, catalyzes the acyloin condensation reaction between C atoms 2 and 3 of pyruvate and glyceraldehyde 3-phosphate to yield 1-deoxy-D-xylulose-5-phosphate (DXP). In Cupriavidus necator (strain ATCC 17699 / DSM 428 / KCTC 22496 / NCIMB 10442 / H16 / Stanier 337) (Ralstonia eutropha), this protein is 1-deoxy-D-xylulose-5-phosphate synthase.